The primary structure comprises 394 residues: p-hydroxybenzoate hydroxylase (394 aa).

FAD-binding positions include S13, E32, R42–V47, and Q102. Substrate contacts are provided by residues Y201, S212–R214, and Y222. Residue D286 participates in FAD binding. P293 is a substrate binding site. L299–N300 is a binding site for FAD.

The protein belongs to the aromatic-ring hydroxylase family. As to quaternary structure, homodimer. FAD is required as a cofactor.

It carries out the reaction 4-hydroxybenzoate + NADPH + O2 + H(+) = 3,4-dihydroxybenzoate + NADP(+) + H2O. It functions in the pathway aromatic compound metabolism; benzoate degradation via hydroxylation; 3,4-dihydroxybenzoate from benzoate: step 2/2. Its function is as follows. Catalyzes the incorporation of an atom of dioxygen into p-hydroxybenzoate (p-OHB) to form 3,4-dihydroxybenzoate (3,4DOHB). The reaction occurs in two parts: reduction of the flavin adenine dinucleotide (FAD) in the enzyme by reduced nicotinamide adenine dinucleotide phosphate (NADPH) in response to binding p-hydroxybenzoate to the enzyme and oxidation of reduced FAD with oxygen to form a hydroperoxide, which then oxygenates p-hydroxybenzoate. The chain is p-hydroxybenzoate hydroxylase (pobA) from Pseudomonas fluorescens.